The following is a 227-amino-acid chain: Transmembrane emp24 domain-containing protein 4 (227 aa).

A signal peptide spans 1-29; that stretch reads MAGVGAGPLRAMGRQALLLLALCATGAQG. The Lumenal segment spans residues 30 to 194; that stretch reads LYFHIGETEK…RLTSESTNQR (165 aa). A GOLD domain is found at 39-137; that stretch reads KRCFIEEIPD…KLRVHLDIQV (99 aa). Asparagine 117 is a glycosylation site (N-linked (GlcNAc...) asparagine). Positions 147–176 form a coiled coil; that stretch reads IAAKDKLTELQLRARQLLDQVEQIQKEQDY. A helical membrane pass occupies residues 195 to 212; that stretch reads VLWWSIAQTVILILTGIW. Topologically, residues 213 to 227 are cytoplasmic; sequence QMRHLKSFFEAKKLV. The COPII vesicle coat-binding motif lies at 220 to 221; sequence FF. A COPI vesicle coat-binding motif is present at residues 220-227; sequence FFEAKKLV.

This sequence belongs to the EMP24/GP25L family.

The protein resides in the endoplasmic reticulum membrane. Its function is as follows. Involved in vesicular protein trafficking, mainly in the early secretory pathway. targeting. Involved in the maintenance of the Golgi apparatus. Appears to play a role in the biosynthesis of secreted cargo including processing. Involved in endoplasmic reticulum stress response. May play a role in the regulation of heat-shock response and apoptosis. The sequence is that of Transmembrane emp24 domain-containing protein 4 (TMED4) from Homo sapiens (Human).